Consider the following 296-residue polypeptide: Protoheme IX farnesyltransferase (296 aa).

Residues 1-9 are Cytoplasmic-facing; sequence MMFKQYLQV. Residues 10–28 traverse the membrane as a helical segment; it reads TKPGIIFGNLISVIGGFLL. The Periplasmic portion of the chain corresponds to 29-37; sequence ASKGSIDYP. A helical membrane pass occupies residues 38 to 56; the sequence is LFIYTLVGVSLVVASGCVF. Residues 57–78 lie on the Cytoplasmic side of the membrane; that stretch reads NNYIDRDIDRKMERTKNRVLVK. The helical transmembrane segment at 79–97 threads the bilayer; that stretch reads GLISPGVSLVYATLLGIAG. The Periplasmic segment spans residues 98 to 107; the sequence is FMLLWFGANP. Residues 108-126 form a helical membrane-spanning segment; it reads LACWLGVMGFVVYVGVYSL. At 127 to 197 the chain is on the cytoplasmic side; that stretch reads YMKRHSVYGT…YQAANIPVLP (71 aa). Residues 198–216 form a helical membrane-spanning segment; it reads VIKGISVAKNHITLYIIAF. The Periplasmic segment spans residues 217 to 228; the sequence is AVATLMLTLGGY. A helical membrane pass occupies residues 229–247; that stretch reads AGYKYLVVAAAVSVWWLGM. Residues 248 to 268 are Cytoplasmic-facing; the sequence is ALRGYKVEDDKVWARKLFGFS. Residues 269–287 traverse the membrane as a helical segment; that stretch reads IIAITALSIMMSVDFMVPN. Topologically, residues 288-296 are periplasmic; the sequence is SQNLLTYVW.

Belongs to the UbiA prenyltransferase family. Protoheme IX farnesyltransferase subfamily.

It is found in the cell inner membrane. It carries out the reaction heme b + (2E,6E)-farnesyl diphosphate + H2O = Fe(II)-heme o + diphosphate. It functions in the pathway porphyrin-containing compound metabolism; heme O biosynthesis; heme O from protoheme: step 1/1. Functionally, converts heme B (protoheme IX) to heme O by substitution of the vinyl group on carbon 2 of heme B porphyrin ring with a hydroxyethyl farnesyl side group. The polypeptide is Protoheme IX farnesyltransferase (Salmonella typhi).